A 192-amino-acid chain; its full sequence is Ciliary microtubule inner protein 3 (192 aa).

The disordered stretch occupies residues 24 to 108 (RAGAEGGPSL…SGQKVKAPHR (85 aa)). A compositionally biased stretch (basic residues) spans 55-64 (APRRPPRPRT).

It belongs to the CIMIP3-like family. In terms of tissue distribution, detected in the sperm flagellum (at protein level).

The protein resides in the cytoplasm. It is found in the cytoskeleton. Its subcellular location is the flagellum axoneme. This chain is Ciliary microtubule inner protein 3, found in Bos taurus (Bovine).